We begin with the raw amino-acid sequence, 833 residues long: Leucine--tRNA ligase (833 aa).

Positions 41 to 52 (PYPSGAGLHVGH) match the 'HIGH' region motif. The short motif at 610 to 614 (KMSKS) is the 'KMSKS' region element. Residue Lys613 participates in ATP binding.

Belongs to the class-I aminoacyl-tRNA synthetase family.

The protein resides in the cytoplasm. The enzyme catalyses tRNA(Leu) + L-leucine + ATP = L-leucyl-tRNA(Leu) + AMP + diphosphate. The polypeptide is Leucine--tRNA ligase (Streptococcus thermophilus (strain CNRZ 1066)).